The sequence spans 398 residues: MIITSLLDTDLYKFTMMQVVLHQFPGAQVEYRFKCRNPGVELAPFVSEIRDEIRALCSLQFQDAELAYLRSLRFIKSDFVDFLGLFRLNEKYIRVSALPSGEIDITITGPWLHTILFEIPVLAIVNEVYFRNTQKVPDFPEGRRRLEAKIGQLQQPGLDSLKIADYGTRRRFSRAWHEEVLRVLCVRLGSDDRRGAPGQFAGTSNVLYAMKLGVTPLGTMAHEYLQACQSLGPRLRDSQVFGFEMWAKEYRGDLGIALSDVYGMSAFLRDFDLYFCKLFDGARHDSGDPFAWGERLLQHYRDNRVDPLTKTLIFSDALTVPRIIELYQRFNGRCQLAFGIGTNLTNDLGYEPLQIVIKMTRCNGQPVAKLSDAPGKNMCNDEKYLAYLRQVFEIPSPQ.

H222 is modified (phosphohistidine; by autocatalysis).

This sequence belongs to the NAPRTase family. In terms of processing, transiently phosphorylated on a His residue during the reaction cycle. Phosphorylation strongly increases the affinity for substrates and increases the rate of nicotinate D-ribonucleotide production. Dephosphorylation regenerates the low-affinity form of the enzyme, leading to product release.

It catalyses the reaction nicotinate + 5-phospho-alpha-D-ribose 1-diphosphate + ATP + H2O = nicotinate beta-D-ribonucleotide + ADP + phosphate + diphosphate. It functions in the pathway cofactor biosynthesis; NAD(+) biosynthesis; nicotinate D-ribonucleotide from nicotinate: step 1/1. Catalyzes the synthesis of beta-nicotinate D-ribonucleotide from nicotinate and 5-phospho-D-ribose 1-phosphate at the expense of ATP. In Acidovorax ebreus (strain TPSY) (Diaphorobacter sp. (strain TPSY)), this protein is Nicotinate phosphoribosyltransferase.